The following is a 498-amino-acid chain: Fascin-3 (498 aa).

It belongs to the fascin family. As to expression, expressed in testis.

Its subcellular location is the cytoplasm. It is found in the cytoskeleton. In terms of biological role, acts as an actin bundling protein. This is Fascin-3 (FSCN3) from Homo sapiens (Human).